The following is a 156-amino-acid chain: Large ribosomal subunit protein uL22 (156 aa).

Belongs to the universal ribosomal protein uL22 family. In terms of assembly, part of the 50S ribosomal subunit.

In terms of biological role, this protein binds specifically to 23S rRNA. It makes multiple contacts with different domains of the 23S rRNA in the assembled 50S subunit and ribosome. The globular domain of the protein is located near the polypeptide exit tunnel on the outside of the subunit, while an extended beta-hairpin is found that lines the wall of the exit tunnel in the center of the 70S ribosome. In Methanocaldococcus jannaschii (strain ATCC 43067 / DSM 2661 / JAL-1 / JCM 10045 / NBRC 100440) (Methanococcus jannaschii), this protein is Large ribosomal subunit protein uL22.